Reading from the N-terminus, the 318-residue chain is Protoheme IX farnesyltransferase (318 aa).

A run of 9 helical transmembrane segments spans residues 34–54 (VMSL…GQIN), 55–75 (PVIG…SGAL), 95–115 (IPAG…LSAF), 118–138 (IILG…TIFF), 155–175 (IVIG…CVTG), 182–202 (IVLF…LALF), 228–250 (IVVY…FASL), 254–273 (AFAT…VLRM), and 287–307 (FAFS…DYMI).

It belongs to the UbiA prenyltransferase family. Protoheme IX farnesyltransferase subfamily.

The protein localises to the cell inner membrane. It carries out the reaction heme b + (2E,6E)-farnesyl diphosphate + H2O = Fe(II)-heme o + diphosphate. The protein operates within porphyrin-containing compound metabolism; heme O biosynthesis; heme O from protoheme: step 1/1. Its function is as follows. Converts heme B (protoheme IX) to heme O by substitution of the vinyl group on carbon 2 of heme B porphyrin ring with a hydroxyethyl farnesyl side group. The protein is Protoheme IX farnesyltransferase of Sinorhizobium fredii (strain NBRC 101917 / NGR234).